Here is a 340-residue protein sequence, read N- to C-terminus: Ketol-acid reductoisomerase (NADP(+)) (340 aa).

The KARI N-terminal Rossmann domain maps to V3–T182. NADP(+) is bound by residues Y26–Q29, R49, S53, and D83–Q86. H108 is a catalytic residue. G134 serves as a coordination point for NADP(+). The KARI C-terminal knotted domain maps to T183–T328. Mg(2+) is bound by residues D191, E195, E227, and E231. S252 contacts substrate.

Belongs to the ketol-acid reductoisomerase family. The cofactor is Mg(2+).

It catalyses the reaction (2R)-2,3-dihydroxy-3-methylbutanoate + NADP(+) = (2S)-2-acetolactate + NADPH + H(+). The catalysed reaction is (2R,3R)-2,3-dihydroxy-3-methylpentanoate + NADP(+) = (S)-2-ethyl-2-hydroxy-3-oxobutanoate + NADPH + H(+). It participates in amino-acid biosynthesis; L-isoleucine biosynthesis; L-isoleucine from 2-oxobutanoate: step 2/4. It functions in the pathway amino-acid biosynthesis; L-valine biosynthesis; L-valine from pyruvate: step 2/4. Its function is as follows. Involved in the biosynthesis of branched-chain amino acids (BCAA). Catalyzes an alkyl-migration followed by a ketol-acid reduction of (S)-2-acetolactate (S2AL) to yield (R)-2,3-dihydroxy-isovalerate. In the isomerase reaction, S2AL is rearranged via a Mg-dependent methyl migration to produce 3-hydroxy-3-methyl-2-ketobutyrate (HMKB). In the reductase reaction, this 2-ketoacid undergoes a metal-dependent reduction by NADPH to yield (R)-2,3-dihydroxy-isovalerate. This chain is Ketol-acid reductoisomerase (NADP(+)), found in Lactococcus lactis subsp. lactis (strain IL1403) (Streptococcus lactis).